We begin with the raw amino-acid sequence, 122 residues long: MPTQPSRDLQTFPNPKPGRPFEIAMECPEFTCVCPMTGQPDFATIRLRYVPAERCVELKSLKLYLWSFRNEGTFHEAVTNRICDDLVAALAPRWIEVVGDFAVRGGIHTVVTARHGERPAGV.

C34 acts as the Thioimide intermediate in catalysis. The active-site Proton donor is D41. Substrate is bound by residues 56–58 (VEL) and 75–76 (HE).

It belongs to the GTP cyclohydrolase I family. QueF type 1 subfamily.

It localises to the cytoplasm. The enzyme catalyses 7-aminomethyl-7-carbaguanine + 2 NADP(+) = 7-cyano-7-deazaguanine + 2 NADPH + 3 H(+). It participates in tRNA modification; tRNA-queuosine biosynthesis. Catalyzes the NADPH-dependent reduction of 7-cyano-7-deazaguanine (preQ0) to 7-aminomethyl-7-deazaguanine (preQ1). The polypeptide is NADPH-dependent 7-cyano-7-deazaguanine reductase (Anaeromyxobacter dehalogenans (strain 2CP-1 / ATCC BAA-258)).